Here is a 593-residue protein sequence, read N- to C-terminus: UvrABC system protein C (593 aa).

The region spanning 14-91 (DSPGCYLHKD…IQENMPKYNI (78 aa)) is the GIY-YIG domain. The region spanning 196–231 (NKIVNGLTEKMKSAAMTMEFERAAEYRDLIEAISLL) is the UVR domain.

The protein belongs to the UvrC family. In terms of assembly, interacts with UvrB in an incision complex.

The protein localises to the cytoplasm. In terms of biological role, the UvrABC repair system catalyzes the recognition and processing of DNA lesions. UvrC both incises the 5' and 3' sides of the lesion. The N-terminal half is responsible for the 3' incision and the C-terminal half is responsible for the 5' incision. The sequence is that of UvrABC system protein C from Streptococcus agalactiae serotype III (strain NEM316).